A 332-amino-acid chain; its full sequence is Super small secreted glycoprotein (332 aa).

The signal sequence occupies residues 1–33 (MGSGYQLLQLPRERFRKTSFLVWVIILFQRAIS). The N-linked (GlcNAc...) asparagine; by host glycan is linked to Asn-41. 2 disulfide bridges follow: Cys-109-Cys-136 and Cys-122-Cys-148. Asn-205, Asn-239, Asn-258, and Asn-269 each carry an N-linked (GlcNAc...) asparagine; by host glycan.

The protein belongs to the filoviruses glycoprotein family.

Its subcellular location is the secreted. The protein is Super small secreted glycoprotein (GP) of Homo sapiens (Human).